Here is a 268-residue protein sequence, read N- to C-terminus: Mediator of RNA polymerase II transcription subunit 8-A (268 aa).

Coiled coils occupy residues 1-26 and 117-160; these read MQRE…KNSL and VEEL…EERE. The interval 190 to 268 is disordered; sequence GLSNRRPPGQ…KSASMHPYQR (79 aa). Residues 223 to 246 are compositionally biased toward polar residues; sequence VPMSLQSNQQQQHMAGVSMSQGNQ.

Belongs to the Mediator complex subunit 8 family. Component of the Mediator complex. May be part of a multisubunit E3 ubiquitin-protein ligase complex.

The protein localises to the nucleus. The protein operates within protein modification; protein ubiquitination. Component of the Mediator complex, a coactivator involved in the regulated transcription of nearly all RNA polymerase II-dependent genes. Mediator functions as a bridge to convey information from gene-specific regulatory proteins to the basal RNA polymerase II transcription machinery. Mediator is recruited to promoters by direct interactions with regulatory proteins and serves as a scaffold for the assembly of a functional preinitiation complex with RNA polymerase II and the general transcription factors. May play a role as a target recruitment subunit in E3 ubiquitin-protein ligase complexes and thus in ubiquitination and subsequent proteasomal degradation of target proteins. The sequence is that of Mediator of RNA polymerase II transcription subunit 8-A (med8-a) from Xenopus laevis (African clawed frog).